A 283-amino-acid chain; its full sequence is Homeobox protein BarH-like 2 (283 aa).

Disordered stretches follow at residues 107 to 141 (AAAA…RRSR) and 198 to 283 (KGGQ…PPLS). Residues 122–132 (SSESETEQPTP) show a composition bias toward polar residues. A DNA-binding region (homeobox) is located at residues 139 to 198 (RSRTIFTELQLMGLEKKFQKQKYLSTPDRLDLAQSLGLTQLQVKTWYQNRRMKWKKMVLK). Low complexity predominate over residues 268–277 (QPQELSEASS).

This sequence belongs to the BAR homeobox family. As to expression, nervous system, particularly in the telencephalon, spinal cord, and dorsal root ganglia.

The protein resides in the nucleus. Functionally, transcription factor. Binds optimally to the DNA consensus sequence 5'-YYTAATGRTTTTY-3'. May control the expression of neural adhesion molecules such as L1 or Ng-CAM during embryonic development of both the central and peripherical nervous system. May be involved in controlling adhesive processes in keratinizing epithelia. This is Homeobox protein BarH-like 2 (Barx2) from Mus musculus (Mouse).